Here is a 1227-residue protein sequence, read N- to C-terminus: DNA-directed RNA polymerase subunit beta (1227 aa).

This sequence belongs to the RNA polymerase beta chain family. In terms of assembly, the RNAP catalytic core consists of 2 alpha, 1 beta, 1 beta' and 1 omega subunit. When a sigma factor is associated with the core the holoenzyme is formed, which can initiate transcription.

It carries out the reaction RNA(n) + a ribonucleoside 5'-triphosphate = RNA(n+1) + diphosphate. Functionally, DNA-dependent RNA polymerase catalyzes the transcription of DNA into RNA using the four ribonucleoside triphosphates as substrates. The sequence is that of DNA-directed RNA polymerase subunit beta from Chloroflexus aurantiacus (strain ATCC 29366 / DSM 635 / J-10-fl).